Here is a 232-residue protein sequence, read N- to C-terminus: Exosome complex component RRP40 (232 aa).

The protein belongs to the RRP40 family. As to quaternary structure, component of the RNA exosome complex. Specifically part of the catalytically inactive RNA exosome core complex.

It is found in the cytoplasm. The protein resides in the nucleus. Its subcellular location is the nucleolus. Its function is as follows. Non-catalytic component of the RNA exosome complex which has 3'-&gt;5' exoribonuclease activity and participates in a multitude of cellular RNA processing and degradation events. In the nucleus, the RNA exosome complex is involved in proper maturation of stable RNA species such as rRNA, snRNA and snoRNA, in the elimination of RNA processing by-products and non-coding 'pervasive' transcripts such as antisense RNA species, and of mRNAs with processing defects, thereby limiting or excluding their export to the cytoplasm. In the cytoplasm, the RNA exosome complex is involved in general mRNA turnover and specifically degrades inherently unstable mRNAs containing AU-rich elements (AREs) within their 3' untranslated regions, and in RNA surveillance pathways, preventing translation of aberrant mRNAs. The catalytic inactive RNA exosome core complex of 9 subunits is proposed to play a pivotal role in the binding and presentation of RNA for ribonucleolysis, and to serve as a scaffold for the association with catalytic subunits and accessory proteins or complexes. Required generally for normal embryonic and neuronal development. Also plays a critical role in the maintenance of neuronal function in mature flies by controlling the levels of specific mRNAs such as the synaptic regulator Arc1. This is Exosome complex component RRP40 from Drosophila melanogaster (Fruit fly).